The primary structure comprises 68 residues: UPF0435 protein SAOUHSC_02093 (68 aa).

The protein belongs to the UPF0435 family.

This is UPF0435 protein SAOUHSC_02093 from Staphylococcus aureus (strain NCTC 8325 / PS 47).